An 831-amino-acid polypeptide reads, in one-letter code: Multiphosphoryl transfer protein 1 (831 aa).

Residues 1–90 (MLTIQFLCPL…EYIQVRFIDS (90 aa)) enclose the HPr domain. Catalysis depends on His-15, which acts as the Pros-phosphohistidine intermediate; for HPr activity. His-15 bears the Phosphohistidine; by EI mark. A PTS EI region spans residues 119–650 (GNVLASGVGV…AVKSQLRQLD (532 aa)). The Tele-phosphohistidine intermediate; for PTS EI activity role is filled by His-298. His-298 is modified (phosphohistidine; by autocatalysis). Arg-405 and Arg-441 together coordinate phosphoenolpyruvate. Positions 540 and 564 each coordinate Mg(2+). Phosphoenolpyruvate contacts are provided by residues 563–564 (ND) and Arg-574. The active-site Proton donor; for EI activity is the Cys-611. The PTS EIIA type-2 domain maps to 685 to 828 (PLLALENIFV…QSILTLLETE (144 aa)). His-747 functions as the Tele-phosphohistidine intermediate; for PTS EIIA activity in the catalytic mechanism. His-747 carries the post-translational modification Phosphohistidine; by HPr.

Belongs to the PEP-utilizing enzyme family. Mg(2+) is required as a cofactor.

Its subcellular location is the cytoplasm. The enzyme catalyses L-histidyl-[protein] + phosphoenolpyruvate = N(pros)-phospho-L-histidyl-[protein] + pyruvate. The catalysed reaction is D-fructose(out) + N(pros)-phospho-L-histidyl-[protein] = D-fructose 1-phosphate(in) + L-histidyl-[protein]. Its function is as follows. Multifunctional protein that includes general (non sugar-specific) and sugar-specific components of the phosphoenolpyruvate-dependent sugar phosphotransferase system (sugar PTS). This major carbohydrate active transport system catalyzes the phosphorylation of incoming sugar substrates concomitantly with their translocation across the cell membrane. The enzyme II FryABC PTS system is involved in fructose transport. In Escherichia coli (strain K12), this protein is Multiphosphoryl transfer protein 1 (fryA).